The following is a 250-amino-acid chain: 2,3-bisphosphoglycerate-dependent phosphoglycerate mutase (250 aa).

Residues 8–15 (RHGESQWN), 21–22 (TG), R60, 87–90 (ERHY), K98, 114–115 (RR), and 183–184 (GN) contribute to the substrate site. H9 acts as the Tele-phosphohistidine intermediate in catalysis. Catalysis depends on E87, which acts as the Proton donor/acceptor.

The protein belongs to the phosphoglycerate mutase family. BPG-dependent PGAM subfamily. As to quaternary structure, homodimer.

It catalyses the reaction (2R)-2-phosphoglycerate = (2R)-3-phosphoglycerate. It participates in carbohydrate degradation; glycolysis; pyruvate from D-glyceraldehyde 3-phosphate: step 3/5. Its function is as follows. Catalyzes the interconversion of 2-phosphoglycerate and 3-phosphoglycerate. The chain is 2,3-bisphosphoglycerate-dependent phosphoglycerate mutase from Bordetella pertussis (strain Tohama I / ATCC BAA-589 / NCTC 13251).